The chain runs to 372 residues: MTALNHTPLNAAHRALNARMVDFGGWDMPVNYGSQIEEHAAVRTDAGMFDVSHMCVVDFTGSRVRAFFEHAIANHVGKLKTPGKALYSCLLNPQGGVIDDLIVYYFTEEFFRVVVNAGTAEKDIAWFNQLNKQGGYGLTIAPRRDFAIVAVQGPNAREKVWATVPAARAATSELKPFNAAQVAGTPFGDLTIARTGYTGEDGFEVIVPAVHVEVLWNALQQHGVRPCGLGARDTLRLEAGMNLYGQDMDDTVSPLDAGLAWTVDLTAPRDFVGRAALEANGTRAAFVGLILQKENGKAGGVLRAHQKVVTPHGEGEITSGTFSPSMQESIAFARVPAAVQVGDIVQVQIRDKNLPARVVKLPFVRNGKVLAA.

The protein belongs to the GcvT family. In terms of assembly, the glycine cleavage system is composed of four proteins: P, T, L and H.

The enzyme catalyses N(6)-[(R)-S(8)-aminomethyldihydrolipoyl]-L-lysyl-[protein] + (6S)-5,6,7,8-tetrahydrofolate = N(6)-[(R)-dihydrolipoyl]-L-lysyl-[protein] + (6R)-5,10-methylene-5,6,7,8-tetrahydrofolate + NH4(+). Functionally, the glycine cleavage system catalyzes the degradation of glycine. This Burkholderia orbicola (strain MC0-3) protein is Aminomethyltransferase.